We begin with the raw amino-acid sequence, 180 residues long: Acireductone dioxygenase (180 aa).

Residues histidine 97, histidine 99, glutamate 103, and histidine 141 each coordinate Fe(2+). Positions 97, 99, 103, and 141 each coordinate Ni(2+).

It belongs to the acireductone dioxygenase (ARD) family. As to quaternary structure, monomer. Fe(2+) is required as a cofactor. The cofactor is Ni(2+).

The enzyme catalyses 1,2-dihydroxy-5-(methylsulfanyl)pent-1-en-3-one + O2 = 3-(methylsulfanyl)propanoate + CO + formate + 2 H(+). It carries out the reaction 1,2-dihydroxy-5-(methylsulfanyl)pent-1-en-3-one + O2 = 4-methylsulfanyl-2-oxobutanoate + formate + 2 H(+). Its pathway is amino-acid biosynthesis; L-methionine biosynthesis via salvage pathway; L-methionine from S-methyl-5-thio-alpha-D-ribose 1-phosphate: step 5/6. In terms of biological role, catalyzes 2 different reactions between oxygen and the acireductone 1,2-dihydroxy-3-keto-5-methylthiopentene (DHK-MTPene) depending upon the metal bound in the active site. Fe-containing acireductone dioxygenase (Fe-ARD) produces formate and 2-keto-4-methylthiobutyrate (KMTB), the alpha-ketoacid precursor of methionine in the methionine recycle pathway. Ni-containing acireductone dioxygenase (Ni-ARD) produces methylthiopropionate, carbon monoxide and formate, and does not lie on the methionine recycle pathway. In Cronobacter sakazakii (Enterobacter sakazakii), this protein is Acireductone dioxygenase.